A 91-amino-acid polypeptide reads, in one-letter code: MKPGIHPDYHPVVFQDANTGKQFLTRSTLTSARTVEWETSEGVREYPLVVVEVTSDSHPFWTGSRRIVDAAGQVEKFRRRYGSRKSGASSD.

Belongs to the bacterial ribosomal protein bL31 family. Type B subfamily. Part of the 50S ribosomal subunit.

The protein is Large ribosomal subunit protein bL31B of Mycolicibacterium vanbaalenii (strain DSM 7251 / JCM 13017 / BCRC 16820 / KCTC 9966 / NRRL B-24157 / PYR-1) (Mycobacterium vanbaalenii).